We begin with the raw amino-acid sequence, 106 residues long: PTS system N,N'-diacetylchitobiose-specific EIIB component (106 aa).

The region spanning 3-106 is the PTS EIIB type-3 domain; the sequence is KKHIYLFCSA…VAAIKKAAAN (104 aa). Cys-10 serves as the catalytic Phosphocysteine intermediate. At Cys-10 the chain carries Phosphocysteine; by EIIA.

In terms of assembly, forms a complex with ChbA (EIIA). ChbB is a monomer in both its unphosphorylated and phosphorylated forms.

The protein resides in the cytoplasm. It carries out the reaction N,N'-diacetylchitobiose(out) + N(pros)-phospho-L-histidyl-[protein] = diacetylchitobiose-6'-phosphate(in) + L-histidyl-[protein]. Its function is as follows. The phosphoenolpyruvate-dependent sugar phosphotransferase system (sugar PTS), a major carbohydrate active transport system, catalyzes the phosphorylation of incoming sugar substrates concomitantly with their translocation across the cell membrane. The enzyme II ChbABC PTS system is involved in the transport of the chitin disaccharide N,N'-diacetylchitobiose (GlcNAc2). The chain is PTS system N,N'-diacetylchitobiose-specific EIIB component (chbB) from Escherichia coli O157:H7.